We begin with the raw amino-acid sequence, 357 residues long: MKKILPLVIIAPLLISCSSSKNKAENEAYIKDTNGFDILMGQFAHNIENLWGLNEVLIAGPKDYVKYTDQYETRSHINFDAGTITVETIAGDNPSAHLRQAIISTLLMGNDPGTIDLYSDADYIPISKEPFLYGQVLDNNGEPIRWEWHAAHFADYLLQTRLQTRTTGLRQIWSITIQLVPNHLDKRAHKYLGMVRKASQQYGVDQSLILAIMQTESSFNPYAVSHADALGLMQVVQHSAGRDVFKMKGKWGQPSRSYLFDPENNIDTGTAYLAMLQNSYLGGIVNPTSRRYAVITAYNGGAGSVLRVFSRDQNRAFQIINGMPPDQVYQTLSTQHPSAESRRYLYKVNNLQKNYRR.

An N-terminal signal peptide occupies residues 1 to 16 (MKKILPLVIIAPLLIS). A lipid anchor (N-palmitoyl cysteine) is attached at Cys-17. Cys-17 is lipidated: S-diacylglycerol cysteine.

The protein belongs to the transglycosylase Slt family.

Its subcellular location is the cell outer membrane. The enzyme catalyses Exolytic cleavage of the (1-&gt;4)-beta-glycosidic linkage between N-acetylmuramic acid (MurNAc) and N-acetylglucosamine (GlcNAc) residues in peptidoglycan, from either the reducing or the non-reducing ends of the peptidoglycan chains, with concomitant formation of a 1,6-anhydrobond in the MurNAc residue.. Its function is as follows. Murein-degrading enzyme. May play a role in recycling of muropeptides during cell elongation and/or cell division. The protein is Membrane-bound lytic murein transglycosylase C of Sodalis glossinidius (strain morsitans).